We begin with the raw amino-acid sequence, 220 residues long: Deoxyribose-phosphate aldolase (220 aa).

Asp-89 serves as the catalytic Proton donor/acceptor. Lys-151 serves as the catalytic Schiff-base intermediate with acetaldehyde. Catalysis depends on Lys-180, which acts as the Proton donor/acceptor.

This sequence belongs to the DeoC/FbaB aldolase family. DeoC type 1 subfamily.

It localises to the cytoplasm. The enzyme catalyses 2-deoxy-D-ribose 5-phosphate = D-glyceraldehyde 3-phosphate + acetaldehyde. It functions in the pathway carbohydrate degradation; 2-deoxy-D-ribose 1-phosphate degradation; D-glyceraldehyde 3-phosphate and acetaldehyde from 2-deoxy-alpha-D-ribose 1-phosphate: step 2/2. Functionally, catalyzes a reversible aldol reaction between acetaldehyde and D-glyceraldehyde 3-phosphate to generate 2-deoxy-D-ribose 5-phosphate. The sequence is that of Deoxyribose-phosphate aldolase from Streptococcus pneumoniae (strain CGSP14).